We begin with the raw amino-acid sequence, 512 residues long: Sodium-dependent phosphate transport protein 1, chloroplastic (512 aa).

The transit peptide at 1 to 59 directs the protein to the chloroplast; sequence MNARALLCSSNIHSLYTSNRPPEKTSSSRSLRNLKPSPKSLRVWIYPRNRSSVFRVLVR. A run of 11 helical transmembrane segments spans residues 103–123, 141–161, 171–191, 192–212, 234–254, 257–277, 323–343, 361–381, 401–421, 453–473, and 486–506; these read WVIV…RVNM, VGLI…AGGI, VLGF…VAAK, LGLP…GVAM, LVYS…PFLI, FGWP…LTLW, VWAL…LLTW, LLSV…GWIA, IGFL…SPTM, GVLL…GTAA, and VFTI…LFST.

Belongs to the major facilitator superfamily. Sodium/anion cotransporter (TC 2.A.1.14) family. Expressed in flower buds, sepals of mature flowers and mature leaves, less in senescent leaves and at low levels in roots.

Its subcellular location is the plastid. It localises to the chloroplast thylakoid membrane. Its function is as follows. Specific for inorganic phosphate transport across the thylakoid membrane in a sodium dependent manner. Binds glutamate but cannot transport it. May act as an ascorbate transporter at the thylakoid membrane. The sequence is that of Sodium-dependent phosphate transport protein 1, chloroplastic (ANTR1) from Arabidopsis thaliana (Mouse-ear cress).